A 95-amino-acid chain; its full sequence is Bombyxin C-2 (95 aa).

Positions 1-19 (MKLVILLVVVSAMLVLGGA) are cleaved as a signal peptide. A Pyrrolidone carboxylic acid modification is found at Q20. Cystine bridges form between C27-C76, C39-C89, and C75-C80. Positions 47–67 (SGSQYAGYGWPWLPPFSSSRG) are cleaved as a propeptide — c peptide like.

This sequence belongs to the insulin family. As to quaternary structure, heterodimer of a B chain and an A chain linked by two disulfide bonds.

The protein localises to the secreted. Brain peptide responsible for activation of prothoracic glands to produce ecdysone in insects. This is Bombyxin C-2 (BBXC2) from Bombyx mori (Silk moth).